The primary structure comprises 270 residues: A-type potassium channel modulatory protein KCNIP2 (270 aa).

Residues 1-17 (MRGQGRKESLSDSRDLD) show a composition bias toward basic and acidic residues. The interval 1–33 (MRGQGRKESLSDSRDLDGSYDQLTGHPPGPTKK) is disordered. Phosphoserine is present on Ser-9. Residues Cys-45 and Cys-46 are each lipidated (S-palmitoyl cysteine). An EF-hand 1; degenerate domain is found at 81-137 (FELSTVCHRPEGLEQLQEQTKFTRKELQVLYRGFKNECPSGIVNEENFKQIYSQFFP). EF-hand domains follow at residues 140–175 (DSST…ILRG), 176–211 (TIDD…IYDM), and 224–259 (APRE…DENI). Asp-153, Asn-155, Asp-157, Ser-159, Asp-164, Asp-189, Asn-191, Asp-193, Cys-195, Glu-200, Asp-237, Asn-239, Asp-241, and Glu-248 together coordinate Ca(2+). The tract at residues 257-270 (ENIMRSMQLFDNVI) is interaction with KCND2.

It belongs to the recoverin family. Component of heteromultimeric potassium channels. Identified in potassium channel complexes containing KCND1, KCND2, KCND3, KCNIP1, KCNIP2, KCNIP3, KCNIP4, DPP6 and DPP10. The KCND2-KCNIP2 channel complex contains four KCND2 and four KCNIP2 subunits. Interacts with KCND2. Probably part of a complex consisting of KCNIP1, KCNIP2 isoform 3 and KCND2. At least isoform 2 and isoform 3 can self-associate to form homodimers and homotetramers. Isoform 3 interacts with KCNIP1 in a calcium-dependent manner. Interacts with KCND3; each KCNIP2 monomer interacts with two adjacent KCND3 subunits, through both the N-terminal inactivation ball of a KCND3 subunit and a C-terminal helix from the adjacent KCND3 subunit, clamping them together; this interaction modulates the channel gating kinetics. Post-translationally, palmitoylated. Palmitoylation enhances association with the plasma membrane. Expressed in heart ventricle with isoform 1 as most prominent form.

The protein resides in the cell membrane. Regulatory subunit of Kv4/D (Shal)-type voltage-gated rapidly inactivating A-type potassium channels. Modulates channel density, inactivation kinetics and rate of recovery from inactivation in a calcium-dependent and isoform-specific manner. Involved in KCND2 and KCND3 trafficking to the cell surface. May be required for the expression of I(To) currents in the heart. This chain is A-type potassium channel modulatory protein KCNIP2, found in Mustela putorius furo (European domestic ferret).